A 644-amino-acid chain; its full sequence is UvrABC system protein C (644 aa).

The GIY-YIG domain occupies alanine 47 to valine 125. The region spanning threonine 235–isoleucine 270 is the UVR domain.

Belongs to the UvrC family. In terms of assembly, interacts with UvrB in an incision complex.

The protein resides in the cytoplasm. In terms of biological role, the UvrABC repair system catalyzes the recognition and processing of DNA lesions. UvrC both incises the 5' and 3' sides of the lesion. The N-terminal half is responsible for the 3' incision and the C-terminal half is responsible for the 5' incision. The sequence is that of UvrABC system protein C from Sphingopyxis alaskensis (strain DSM 13593 / LMG 18877 / RB2256) (Sphingomonas alaskensis).